Here is a 619-residue protein sequence, read N- to C-terminus: MLLASAVVVWEWLNEHGRWRPYSPAVSHHIEAVVRAGPRAGGSVVLGQVDSRLAPYIIDLQSMNQFRQDTGTLRPVRRNYYDPSSAPGKGVVWEWENDNGSWTPYDMEVGITIQHAYEKQHPWIDLTSIGFSYVIDFNTMGQINRQTQRQRRVRRRLDLIYPMVTGTLPKAQSWPVSPGPATSPPMSPCSCPQCVLVMSVKAAVVNGSTGPLQLPVTRKNMPPPGVVKLPPLPGSGAKPLDSTGTIRGPLKTAPSQVIRRQASSMPTGTTMGSPASPPGPNSKTGRVALATLNRTNLQRLAIAQSRVLIASGVPTVPVKNLNGSSPVNPALAGITGILMSAAGLPVCLTRPPKLVLHPPPVSKSEIKSIPGVSNTSRKTTKKQAKKGKTPEEVLKKYLQKVRHPPDEDCTICMERLTAPSGYKGPQPTVKPDLVGKLSRCGHVYHIYCLVAMYNNGNKDGSLQCPTCKTIYGVKTGTQPPGKMEYHLIPHSLPGHPDCKTIRIIYSIPPGIQGPEHPNPGKSFSARGFPRHCYLPDSEKGRKVLKLLLVAWDRRLIFAIGTSSTTGESDTVIWNEVHHKTEFGSNLTGHGYPDANYLDNVLAELAAQGISEDSTAQEKD.

WWE domains lie at 1 to 78 (MLLA…PVRR) and 79 to 155 (NYYD…RVRR). Disordered stretches follow at residues 238–281 (KPLD…PGPN) and 358–389 (PPPV…KGKT). The span at 261–273 (QASSMPTGTTMGS) shows a compositional bias: polar residues. Residues 378–387 (KTTKKQAKKG) are compositionally biased toward basic residues. An RING-type; atypical zinc finger spans residues 409 to 468 (CTICMERLTAPSGYKGPQPTVKPDLVGKLSRCGHVYHIYCLVAMYNNGNKDGSLQCPTCK).

It belongs to the Deltex family. In terms of assembly, interacts with NLRP4.

The protein localises to the cytoplasm. It carries out the reaction S-ubiquitinyl-[E2 ubiquitin-conjugating enzyme]-L-cysteine + [acceptor protein]-L-lysine = [E2 ubiquitin-conjugating enzyme]-L-cysteine + N(6)-ubiquitinyl-[acceptor protein]-L-lysine.. The protein operates within protein modification; protein ubiquitination. Functionally, regulator of Notch signaling, a signaling pathway involved in cell-cell communications that regulates a broad spectrum of cell-fate determinations. Functions as a ubiquitin ligase protein in vivo, mediating 'Lys48'-linked polyubiquitination and promoting degradation of TBK1, targeting to TBK1 requires interaction with NLRP4. The chain is E3 ubiquitin-protein ligase DTX4 (DTX4) from Homo sapiens (Human).